Here is a 157-residue protein sequence, read N- to C-terminus: uncharacterized protein (157 aa).

One can recognise an N-acetyltransferase domain in the interval 9-146 (LLINYKTLDE…GDFYVWHPET (138 aa)).

This is an uncharacterized protein from Bacillus cereus (strain AH187).